Consider the following 482-residue polypeptide: tRNA sulfurtransferase (482 aa).

The 105-residue stretch at 61–165 folds into the THUMP domain; sequence LAIRDALTRI…DDRLLLIKGR (105 aa). ATP is bound by residues 183-184, Lys-265, Gly-287, and Gln-296; that span reads LI. A disulfide bond links Cys-344 and Cys-456. The region spanning 404-482 is the Rhodanese domain; it reads FGANDVILDI…GFANVKVYRP (79 aa). The active-site Cysteine persulfide intermediate is the Cys-456.

The protein belongs to the ThiI family.

The protein localises to the cytoplasm. It carries out the reaction [ThiI sulfur-carrier protein]-S-sulfanyl-L-cysteine + a uridine in tRNA + 2 reduced [2Fe-2S]-[ferredoxin] + ATP + H(+) = [ThiI sulfur-carrier protein]-L-cysteine + a 4-thiouridine in tRNA + 2 oxidized [2Fe-2S]-[ferredoxin] + AMP + diphosphate. It catalyses the reaction [ThiS sulfur-carrier protein]-C-terminal Gly-Gly-AMP + S-sulfanyl-L-cysteinyl-[cysteine desulfurase] + AH2 = [ThiS sulfur-carrier protein]-C-terminal-Gly-aminoethanethioate + L-cysteinyl-[cysteine desulfurase] + A + AMP + 2 H(+). The protein operates within cofactor biosynthesis; thiamine diphosphate biosynthesis. Functionally, catalyzes the ATP-dependent transfer of a sulfur to tRNA to produce 4-thiouridine in position 8 of tRNAs, which functions as a near-UV photosensor. Also catalyzes the transfer of sulfur to the sulfur carrier protein ThiS, forming ThiS-thiocarboxylate. This is a step in the synthesis of thiazole, in the thiamine biosynthesis pathway. The sulfur is donated as persulfide by IscS. This Salmonella paratyphi B (strain ATCC BAA-1250 / SPB7) protein is tRNA sulfurtransferase.